The sequence spans 1582 residues: Hybrid PKS-NRPS synthetase TAS1 (1582 aa).

The tract at residues 33-387 is condensation (C) domain; the sequence is IPLSKVQEVL…GEDTAAASRV (355 aa). Residues 499 to 892 form an adenylation (A) domain region; the sequence is RSRAATQPDE…KLHILGRMNN (394 aa). One can recognise a Carrier domain in the interval 1015 to 1092; it reads NLVDRLEASI…RQAQRLSELV (78 aa). One can recognise a Ketosynthase family 3 (KS3) domain in the interval 1127–1574; sequence APLFAIVGMA…GVNAHCILAS (448 aa). Active-site for beta-ketoacyl synthase activity residues include C1294 and H1432. The segment at 1460–1485 is disordered; that stretch reads ESRCSSGAISPTGTEQQPSDTKQTPR. Residues 1462 to 1485 show a composition bias toward polar residues; sequence RCSSGAISPTGTEQQPSDTKQTPR. Residue N1498 is the For beta-ketoacyl synthase activity of the active site.

The protein in the N-terminal section; belongs to the NRP synthetase family. The cofactor is pantetheine 4'-phosphate.

The catalysed reaction is acetoacetyl-CoA + L-isoleucine + ATP = tenuazonic acid + AMP + diphosphate + CoA + 2 H(+). Hybrid PKS-NRPS synthetase that mediates the biosynthesis of the toxin tenuazonic acid (TeA), an inhibitor of protein biosynthesis on ribosomes by suppressing the release of new protein. TAS1 alone is sufficient for TeA synthesis via the condensation of isoleucine (Ile) with acetoacetyl-CoA by the N-terminal NRPS module and subsequent cyclization conducted by the C-terminal KS domain. This chain is Hybrid PKS-NRPS synthetase TAS1, found in Cordyceps militaris (strain CM01) (Caterpillar fungus).